Consider the following 430-residue polypeptide: Mothers against decapentaplegic homolog 9 (430 aa).

The MH1 domain maps to 16-140 (PAVKRLLGWK…YRRVETPVLP (125 aa)). Zn(2+) contacts are provided by C68, C113, C125, and H130. Positions 186-222 (CPAPPSSPGHVFPQSPCPTSYPHSPGSPSESDSPYQH) are disordered. Residues 202–221 (CPTSYPHSPGSPSESDSPYQ) show a composition bias toward polar residues. The region spanning 236 to 430 (WCSVAYYELN…SPHNPISSVS (195 aa)) is the MH2 domain.

This sequence belongs to the dwarfin/SMAD family. Interaction with the co-SMAD SMAD4. Interacts with PEBP2-alpha subunit. Interacts with RANBP3L. In terms of processing, phosphorylated on serine by BMP (bone morphogenetic proteins) type 1 receptor kinase and activin type I receptor-like kinases (ALK-2, ALK-3 and ALK-6).

It is found in the cytoplasm. Its subcellular location is the nucleus. Its function is as follows. Transcriptional modulator activated by BMP (bone morphogenetic proteins) type 1 receptor kinase. SMAD9 is a receptor-regulated SMAD (R-SMAD). Has been shown to be activated by activin type I receptor-like kinases (ALK-2, ALK-3, ALK-6) which stimulate heteromerization between SMAD9 and SMAD4. May play a role in osteoblast differentiation and maturation. The chain is Mothers against decapentaplegic homolog 9 (Smad9) from Mus musculus (Mouse).